Consider the following 359-residue polypeptide: Photosystem II protein D1 3 (359 aa).

The next 3 membrane-spanning stretches (helical) occupy residues 29-46 (YVGW…AATI), 118-133 (HFLI…EWEL), and 142-156 (WICV…AASA). H118 serves as a coordination point for chlorophyll a. Y126 contacts pheophytin a. Residues D170 and E189 each contribute to the [CaMn4O5] cluster site. Residues 197 to 218 (FHMLGVAGVFGGSLFSAMHGSL) form a helical membrane-spanning segment. Chlorophyll a is bound at residue H198. Residues H215 and 264 to 265 (SF) each bind a quinone. H215 contacts Fe cation. H272 lines the Fe cation pocket. A helical membrane pass occupies residues 274 to 288 (FLAAWPVVGIWFTAL). [CaMn4O5] cluster-binding residues include H332, E333, D342, and A344. Positions 345-359 (AAESTPVALQVPAIG) are excised as a propeptide.

Belongs to the reaction center PufL/M/PsbA/D family. As to quaternary structure, PSII is composed of 1 copy each of membrane proteins PsbA, PsbB, PsbC, PsbD, PsbE, PsbF, PsbH, PsbI, PsbJ, PsbK, PsbL, PsbM, PsbT, PsbX, PsbY, PsbZ, Psb30/Ycf12, peripheral proteins PsbO, CyanoQ (PsbQ), PsbU, PsbV and a large number of cofactors. It forms dimeric complexes. The D1/D2 heterodimer binds P680, chlorophylls that are the primary electron donor of PSII, and subsequent electron acceptors. It shares a non-heme iron and each subunit binds pheophytin, quinone, additional chlorophylls, carotenoids and lipids. D1 provides most of the ligands for the Mn4-Ca-O5 cluster of the oxygen-evolving complex (OEC). There is also a Cl(-1) ion associated with D1 and D2, which is required for oxygen evolution. The PSII complex binds additional chlorophylls, carotenoids and specific lipids. serves as cofactor. Post-translationally, tyr-161 forms a radical intermediate that is referred to as redox-active TyrZ, YZ or Y-Z. C-terminally processed by CtpA; processing is essential to allow assembly of the oxygen-evolving complex and thus photosynthetic growth.

It localises to the cellular thylakoid membrane. The catalysed reaction is 2 a plastoquinone + 4 hnu + 2 H2O = 2 a plastoquinol + O2. In terms of biological role, photosystem II (PSII) is a light-driven water:plastoquinone oxidoreductase that uses light energy to abstract electrons from H(2)O, generating O(2) and a proton gradient subsequently used for ATP formation. It consists of a core antenna complex that captures photons, and an electron transfer chain that converts photonic excitation into a charge separation. The D1/D2 (PsbA/PsbD) reaction center heterodimer binds P680, the primary electron donor of PSII as well as several subsequent electron acceptors. In Parasynechococcus marenigrum (strain WH8102), this protein is Photosystem II protein D1 3.